A 69-amino-acid polypeptide reads, in one-letter code: Disintegrin EC6 subunit beta (69 aa).

The 65-residue stretch at 1 to 65 (NSVHPCCDPV…DCPPNPWNGK (65 aa)) folds into the Disintegrin domain. 4 cysteine pairs are disulfide-bonded: C6–C29, C20–C26, C25–C50, and C38–C57. Positions 42 to 44 (RGD) match the Cell attachment site motif.

It belongs to the venom metalloproteinase (M12B) family. P-II subfamily. P-IIe sub-subfamily. Heterodimer with subunit alpha; disulfide-linked. As to expression, expressed by the venom gland.

It localises to the secreted. Potently inhibits adhesion of alpha-4/beta-1 (ITGA4/ITGB1) and alpha-9/beta-1 (ITGA9/ITGB1) integrins to VCAM1, and adhesion of alpha-5/beta-1 (ITGA5/ITGB1) integrin to fibronectin. Has a much less effect on alpha-IIb/beta-3 (ITGA2B/ITGB3) integrin. Also potently inhibits neutrophil migration across TNF-alpha-activated human umbilical endothelial cells. The sequence is that of Disintegrin EC6 subunit beta from Echis carinatus sochureki (Saw-scaled viper).